Here is a 137-residue protein sequence, read N- to C-terminus: MRILGLDVGTKTVGVAISDEMGWTAQGLETIKINEERGQFGFDRISELVKQYDVDKIVVGLPKNMNGTIGPRGEACQQFAENLRELLQLDVVMWDERLSTMAAERLLISADVSRKKRKQVIDKMAAVVILQGFLDRK.

Belongs to the YqgF nuclease family.

Its subcellular location is the cytoplasm. Could be a nuclease involved in processing of the 5'-end of pre-16S rRNA. This chain is Putative pre-16S rRNA nuclease, found in Bacillus cereus (strain AH187).